The chain runs to 234 residues: Adenosine 5'-phosphosulfate reductase (234 aa).

Residues Cys-120, Cys-121, Cys-203, and Cys-206 each contribute to the [4Fe-4S] cluster site. Residue Cys-229 is the Nucleophile; cysteine thiosulfonate intermediate of the active site.

It belongs to the PAPS reductase family. CysH subfamily. The cofactor is [4Fe-4S] cluster.

The protein resides in the cytoplasm. The enzyme catalyses [thioredoxin]-disulfide + sulfite + AMP + 2 H(+) = adenosine 5'-phosphosulfate + [thioredoxin]-dithiol. Its pathway is sulfur metabolism; hydrogen sulfide biosynthesis; sulfite from sulfate. Its function is as follows. Catalyzes the formation of sulfite from adenosine 5'-phosphosulfate (APS) using thioredoxin as an electron donor. In Bacillus cereus (strain 03BB102), this protein is Adenosine 5'-phosphosulfate reductase.